The sequence spans 85 residues: Contulakin-Lt1 (85 aa).

The signal sequence occupies residues 1–22 (MRTAYWVMVMMMVGITAPLSEG). The propeptide occupies 23–60 (RKLNDAIRGLVADYLTPQLLQSLVSAPYPEFQLDDPNL). A disulfide bond links Cys65 and Cys70. The propeptide occupies 76 to 85 (RRRDLKKRNK).

Belongs to the conotoxin C superfamily. In terms of tissue distribution, expressed by the venom duct.

It localises to the secreted. In terms of biological role, acts as an agonist of neurotensin receptors. It binds to human neurotensin type 1 receptor (NTSR1), rat neurotensin types 1 and 2 receptors (NTSR1/NTSR2) and mouse neurotensin type 3 receptor (SORT1). The chain is Contulakin-Lt1 from Conus litteratus (Lettered cone).